The chain runs to 196 residues: Corrinoid adenosyltransferase CobA (196 aa).

Residue 36 to 42 (GNGKGKT) participates in ATP binding.

Belongs to the Cob(I)alamin adenosyltransferase family. Homodimer.

It localises to the cytoplasm. The catalysed reaction is 2 cob(II)yrinate a,c diamide + reduced [electron-transfer flavoprotein] + 2 ATP = 2 adenosylcob(III)yrinate a,c-diamide + 2 triphosphate + oxidized [electron-transfer flavoprotein] + 3 H(+). It carries out the reaction 2 cob(II)alamin + reduced [electron-transfer flavoprotein] + 2 ATP = 2 adenosylcob(III)alamin + 2 triphosphate + oxidized [electron-transfer flavoprotein] + 3 H(+). Its pathway is cofactor biosynthesis; adenosylcobalamin biosynthesis; adenosylcobalamin from cob(II)yrinate a,c-diamide: step 2/7. Required for both de novo synthesis of the corrin ring for the assimilation of exogenous corrinoids. Participates in the adenosylation of a variety of incomplete and complete corrinoids. The polypeptide is Corrinoid adenosyltransferase CobA (btuR) (Salmonella typhimurium (strain LT2 / SGSC1412 / ATCC 700720)).